Reading from the N-terminus, the 425-residue chain is Divalent metal cation transporter MntH (425 aa).

Transmembrane regions (helical) follow at residues 30–50, 61–81, 107–127, 134–154, 167–187, 209–231, 255–275, 294–314, 344–364, 365–385, and 401–421; these read LLPF…PGNF, GYML…IQSL, IGLW…EFIG, LLFG…SFAI, AGIA…TFFA, VLLA…HSAL, ILIA…VAAA, FGHL…LVAG, FITI…TTAL, VLSQ…LIMF, and ITVV…FLIV.

This sequence belongs to the NRAMP family.

It localises to the cell membrane. Its function is as follows. H(+)-stimulated, divalent metal cation uptake system. Involved in manganese uptake. Can probably also transport cadmium, cobalt, copper and zinc, but not iron. May be the predominant transporter of manganese during logarithmic phase growth. In Bacillus subtilis (strain 168), this protein is Divalent metal cation transporter MntH.